The chain runs to 218 residues: Elongation factor Ts (218 aa).

The tract at residues 82–85 (TDFV) is involved in Mg(2+) ion dislocation from EF-Tu.

Belongs to the EF-Ts family.

The protein localises to the cytoplasm. In terms of biological role, associates with the EF-Tu.GDP complex and induces the exchange of GDP to GTP. It remains bound to the aminoacyl-tRNA.EF-Tu.GTP complex up to the GTP hydrolysis stage on the ribosome. This Prochlorococcus marinus (strain AS9601) protein is Elongation factor Ts.